We begin with the raw amino-acid sequence, 104 residues long: Large ribosomal subunit protein uL23 (104 aa).

Belongs to the universal ribosomal protein uL23 family. In terms of assembly, part of the 50S ribosomal subunit. Contacts protein L29, and trigger factor when it is bound to the ribosome.

Its function is as follows. One of the early assembly proteins it binds 23S rRNA. One of the proteins that surrounds the polypeptide exit tunnel on the outside of the ribosome. Forms the main docking site for trigger factor binding to the ribosome. This chain is Large ribosomal subunit protein uL23, found in Leptospira borgpetersenii serovar Hardjo-bovis (strain JB197).